A 351-amino-acid polypeptide reads, in one-letter code: MKSLKEEIQKLAADLNIQKIGFTKADDFEYLRASLIEQKEAGHTSGFEHKNLDERLQPKLSLEDAKTIISIGIAYPNKAEEKPEKTEYRRGSFSRGSWGEDYHHVLRRKLKELAEGIEKIAGDFNYTAMVDTGALVDVAVAARAGLGFVGKNGLLVSKEYGSWMFLGELVTNLDIEEDQPVDYGCGSCTRCVDFCPTKALLGDGRLNAQRCLSYQTQTRGVMPEEYREKIKTVIYGCDICQVVCPYNKGINSHFHPEMEPDPDLTNPELLPLLDLSNKEFANKFGNMAGSWRGKNPIQRNVVYALGNANDRSALPKLHDIAENDVRDYMVDAAEWAIEKLENKHRMRPRKR.

D131 serves as the catalytic Proton donor. Residues 177–205 (EDQPVDYGCGSCTRCVDFCPTKALLGDGR) form the 4Fe-4S ferredoxin-type domain. The [4Fe-4S] cluster site is built by C185, C188, C191, C195, C211, C237, C240, and C244.

Belongs to the QueG family. Monomer. Cob(II)alamin serves as cofactor. It depends on [4Fe-4S] cluster as a cofactor.

It localises to the cytoplasm. It catalyses the reaction epoxyqueuosine(34) in tRNA + AH2 = queuosine(34) in tRNA + A + H2O. Its pathway is tRNA modification; tRNA-queuosine biosynthesis. Catalyzes the conversion of epoxyqueuosine (oQ) to queuosine (Q), which is a hypermodified base found in the wobble positions of tRNA(Asp), tRNA(Asn), tRNA(His) and tRNA(Tyr). The polypeptide is Epoxyqueuosine reductase (Lactococcus garvieae (strain Lg2) (Enterococcus seriolicida)).